A 414-amino-acid chain; its full sequence is Mu-like prophage FluMu F protein (414 aa).

It to phage Mu protein F.

In terms of biological role, involved in virion morphogenesis. The polypeptide is Mu-like prophage FluMu F protein (Haemophilus influenzae (strain ATCC 51907 / DSM 11121 / KW20 / Rd)).